A 472-amino-acid polypeptide reads, in one-letter code: Eukaryotic translation initiation factor 2 subunit 3 (472 aa).

Residue A2 is modified to N-acetylalanine. At S16 the chain carries Phosphoserine. Residues 39 to 248 form the tr-type G domain; sequence QATINIGTIG…IVKKIPVPPR (210 aa). Residues 48–55 form a G1 region; sequence GHVAHGKS. 51 to 56 is a GTP binding site; that stretch reads AHGKST. A G2 region spans residues 76–80; it reads NITIK. Positions 134-137 are G3; sequence DCPG. Residues 190–193 and 225–227 each bind GTP; these read NKID and SAQ. The G4 stretch occupies residues 190–193; that stretch reads NKID. The tract at residues 225 to 227 is G5; the sequence is SAQ. The interacts with CDC123 stretch occupies residues 457–469; the sequence is GQIRRGVTIKPTV.

This sequence belongs to the TRAFAC class translation factor GTPase superfamily. Classic translation factor GTPase family. EIF2G subfamily. Eukaryotic translation initiation factor 2 eIF2 is a heterotrimeric complex composed of an alpha (EIF2S1), a beta (EIF2S2) and a gamma (EIF2S3) chain. eIF2 is member of the 43S pre-initiation complex (43S PIC). Interacts (via C-terminus) with CDC123; the interaction is direct.

It localises to the cytoplasm. Its subcellular location is the cytosol. The enzyme catalyses GTP + H2O = GDP + phosphate + H(+). Its function is as follows. Member of the eIF2 complex that functions in the early steps of protein synthesis by forming a ternary complex with GTP and initiator tRNA. This complex binds to a 40S ribosomal subunit, followed by mRNA binding to form the 43S pre-initiation complex (43S PIC). Junction of the 60S ribosomal subunit to form the 80S initiation complex is preceded by hydrolysis of the GTP bound to eIF2 and release of an eIF2-GDP binary complex. In order for eIF2 to recycle and catalyze another round of initiation, the GDP bound to eIF2 must exchange with GTP by way of a reaction catalyzed by eIF-2B. The sequence is that of Eukaryotic translation initiation factor 2 subunit 3 (EIF2S3) from Sus scrofa (Pig).